We begin with the raw amino-acid sequence, 4731 residues long: Dynein axonemal heavy chain 8 (4731 aa).

Positions 1-145 are disordered; sequence MESEEGNAEP…SKFRRSMTGI (145 aa). A compositionally biased stretch (pro residues) spans 9–55; the sequence is EPPPPSEEAPPPVVEEAPPPLPPEDTAPPPPEEQAPPPEGDAAPPPT. Over residues 66-75 the composition is skewed to basic and acidic residues; the sequence is EAPHPEDPKL. The span at 94-106 shows a compositional bias: acidic residues; the sequence is SDEEVTLPEDEES. The segment covering 122–133 has biased composition (polar residues); it reads SVLSDGISQSSR. Residues 145–169 are a coiled coil; sequence IPNLQETLKEKQARFREARENRKMK. Phosphoserine is present on serine 917. Residues 1177-1201 form a disordered region; that stretch reads FQNNSRGSDQPPASGKPLKKEERSF. A coiled-coil region spans residues 1543-1567; sequence DVDIEKINAELQEFQNRCRKLPRAL. 4 AAA regions span residues 2049-2271, 2331-2550, 2657-2910, and 3021-3275; these read YQNE…VLRT, SAVD…KLSL, FYPT…IWQG, and QFNE…YRRR. Residues 2087–2094 and 2369–2376 contribute to the ATP site; these read GPAGTGKT and GPSGSGKT. Residues 3290 to 3587 form a stalk region; sequence YKSIYTDKVK…MDLLNDADMC (298 aa). 3 coiled-coil regions span residues 3313–3405, 3531–3583, and 3836–3871; these read DKLM…ALNT, LKAN…LLND, and RVILTEKQELESERVKLLEDVTFNKRKMKELEDNLL. AAA stretches follow at residues 3673 to 3903 and 4118 to 4332; these read LVDP…EVSE and ARKY…FIQN.

Belongs to the dynein heavy chain family. In terms of assembly, consists of at least two heavy chains and a number of intermediate and light chains. In terms of tissue distribution, isoform 1 and/or isoform 2 are expressed in spermatocytes and mature sperm (at protein level). Testis-specific. Accumulates exclusively in mid to late spermatocytes.

It localises to the cytoplasm. The protein localises to the cytoskeleton. Its subcellular location is the flagellum axoneme. Functionally, force generating protein component of the outer dynein arms (ODAs) in the sperm flagellum. Produces force towards the minus ends of microtubules. Dynein has ATPase activity; the force-producing power stroke is thought to occur on release of ADP. Involved in sperm motility; implicated in sperm flagellar assembly. The chain is Dynein axonemal heavy chain 8 (Dnah8) from Mus musculus (Mouse).